The following is a 75-amino-acid chain: UPF0352 protein YejL (75 aa).

This sequence belongs to the UPF0352 family.

In Salmonella agona (strain SL483), this protein is UPF0352 protein YejL.